A 441-amino-acid chain; its full sequence is 3-phosphoshikimate 1-carboxyvinyltransferase (441 aa).

Over residues 1–10 (MSVTSTASSS) the composition is skewed to polar residues. Positions 1-21 (MSVTSTASSSRELRAGGGLSG) are disordered. 3-phosphoshikimate contacts are provided by lysine 29, serine 30, and arginine 34. Residue lysine 29 coordinates phosphoenolpyruvate. Phosphoenolpyruvate contacts are provided by glycine 103 and arginine 132. Residues serine 177, glutamine 179, aspartate 328, and lysine 355 each coordinate 3-phosphoshikimate. Residue glutamine 179 participates in phosphoenolpyruvate binding. The active-site Proton acceptor is the aspartate 328. Phosphoenolpyruvate is bound by residues arginine 359 and arginine 401.

This sequence belongs to the EPSP synthase family. As to quaternary structure, monomer.

It localises to the cytoplasm. The enzyme catalyses 3-phosphoshikimate + phosphoenolpyruvate = 5-O-(1-carboxyvinyl)-3-phosphoshikimate + phosphate. It functions in the pathway metabolic intermediate biosynthesis; chorismate biosynthesis; chorismate from D-erythrose 4-phosphate and phosphoenolpyruvate: step 6/7. Its function is as follows. Catalyzes the transfer of the enolpyruvyl moiety of phosphoenolpyruvate (PEP) to the 5-hydroxyl of shikimate-3-phosphate (S3P) to produce enolpyruvyl shikimate-3-phosphate and inorganic phosphate. This Prochlorococcus marinus (strain MIT 9303) protein is 3-phosphoshikimate 1-carboxyvinyltransferase.